Consider the following 324-residue polypeptide: Phospho-N-acetylmuramoyl-pentapeptide-transferase (324 aa).

9 helical membrane-spanning segments follow: residues 5 to 25 (VILF…PIFI), 51 to 71 (TPTM…IVMI), 77 to 97 (ISPE…LGFL), 117 to 137 (LIGQ…YQFA), 147 to 167 (VSFD…VGGS), 176 to 196 (LDGL…ILAW), 203 to 223 (VAIF…FNAH), 227 to 248 (VFMG…AILT), and 302 to 322 (VVVT…YIEV).

It belongs to the glycosyltransferase 4 family. MraY subfamily. Requires Mg(2+) as cofactor.

The protein resides in the cell membrane. The enzyme catalyses UDP-N-acetyl-alpha-D-muramoyl-L-alanyl-gamma-D-glutamyl-meso-2,6-diaminopimeloyl-D-alanyl-D-alanine + di-trans,octa-cis-undecaprenyl phosphate = di-trans,octa-cis-undecaprenyl diphospho-N-acetyl-alpha-D-muramoyl-L-alanyl-D-glutamyl-meso-2,6-diaminopimeloyl-D-alanyl-D-alanine + UMP. Its pathway is cell wall biogenesis; peptidoglycan biosynthesis. Catalyzes the initial step of the lipid cycle reactions in the biosynthesis of the cell wall peptidoglycan: transfers peptidoglycan precursor phospho-MurNAc-pentapeptide from UDP-MurNAc-pentapeptide onto the lipid carrier undecaprenyl phosphate, yielding undecaprenyl-pyrophosphoryl-MurNAc-pentapeptide, known as lipid I. In Bacillus pumilus (strain SAFR-032), this protein is Phospho-N-acetylmuramoyl-pentapeptide-transferase.